Consider the following 101-residue polypeptide: Large ribosomal subunit protein uL24 (101 aa).

This sequence belongs to the universal ribosomal protein uL24 family. As to quaternary structure, part of the 50S ribosomal subunit.

In terms of biological role, one of two assembly initiator proteins, it binds directly to the 5'-end of the 23S rRNA, where it nucleates assembly of the 50S subunit. Its function is as follows. One of the proteins that surrounds the polypeptide exit tunnel on the outside of the subunit. This chain is Large ribosomal subunit protein uL24, found in Streptococcus gordonii (strain Challis / ATCC 35105 / BCRC 15272 / CH1 / DL1 / V288).